A 491-amino-acid polypeptide reads, in one-letter code: Beta-galactosidase (491 aa).

Glu209 acts as the Proton donor in catalysis. The active-site Nucleophile is the Glu389.

The protein belongs to the glycosyl hydrolase 1 family.

It catalyses the reaction Hydrolysis of terminal non-reducing beta-D-galactose residues in beta-D-galactosides.. This chain is Beta-galactosidase (bgaS), found in Sulfolobus acidocaldarius (strain ATCC 33909 / DSM 639 / JCM 8929 / NBRC 15157 / NCIMB 11770).